The primary structure comprises 423 residues: Galactosylceramide sulfotransferase (423 aa).

Topologically, residues 1–12 (MTLLPKKPCKSK) are cytoplasmic. The helical; Signal-anchor for type II membrane protein transmembrane segment at 13–35 (AKGLLLGALFTSFLLLLYSYVVP) threads the bilayer. Residues 36 to 423 (PLYPNMAFTT…WKFLRDFLRW (388 aa)) lie on the Lumenal side of the membrane. Residues N66 and N312 are each glycosylated (N-linked (GlcNAc...) asparagine).

It belongs to the galactose-3-O-sulfotransferase family. Expressed in brain, testis, kidney, stomach, small intestine, liver, and lung. Not detected in heart, skeletal muscle, and spleen.

Its subcellular location is the golgi apparatus membrane. It catalyses the reaction a beta-D-galactosyl-(1&lt;-&gt;1')-N-acylsphing-4-enine + 3'-phosphoadenylyl sulfate = an N-acyl-1-beta-D-(3-O-sulfo)-galactosyl-sphing-4-enine + adenosine 3',5'-bisphosphate + H(+). The enzyme catalyses a 1-O-alkyl-2-acyl-3-O-(beta-D-galactosyl)-sn-glycerol + 3'-phosphoadenylyl sulfate = a 1-O-alkyl-2-acyl-3-(beta-D-3-sulfogalactosyl)-sn-glycerol + adenosine 3',5'-bisphosphate + H(+). The catalysed reaction is a beta-D-Gal-(1&lt;-&gt;1')-ceramide + 3'-phosphoadenylyl sulfate = 1-(3-O-sulfo-beta-D-galactosyl)-ceramide + adenosine 3',5'-bisphosphate + H(+). It carries out the reaction a 1,2-diacyl-3-O-(beta-D-galactosyl)-sn-glycerol + 3'-phosphoadenylyl sulfate = 1,2-diacyl-3-(3-O-sulfo-beta-D-galactosyl)-sn-glycerol + adenosine 3',5'-bisphosphate + H(+). It catalyses the reaction a beta-D-Gal-(1-&gt;4)-beta-D-Glc-(1&lt;-&gt;1)-Cer(d18:1(4E)) + 3'-phosphoadenylyl sulfate = beta-D-3-sulfogalactosyl-(1-&gt;4)-beta-D-glucosyl-(1&lt;-&gt;1')-N-acylsphing-4-enine + adenosine 3',5'-bisphosphate + H(+). It functions in the pathway lipid metabolism; sphingolipid metabolism. Its function is as follows. Catalyzes the transfer of a sulfate group to position 3 of non-reducing beta-galactosyl residues in glycerolipids and sphingolipids, therefore participates in the biosynthesis of sulfoglycolipids. Catalyzes the synthesis of galactosylceramide sulfate (sulfatide), a major lipid component of the myelin sheath and of monogalactosylalkylacylglycerol sulfate (seminolipid), present in spermatocytes. Seems to prefer beta-glycosides at the non-reducing termini of sugar chains attached to a lipid moiety. Also acts on lactosylceramide, galactosyl 1-alkyl-2-sn-glycerol and galactosyl diacylglycerol (in vitro). In Mus musculus (Mouse), this protein is Galactosylceramide sulfotransferase.